The sequence spans 473 residues: Lactate utilization protein B 2 (473 aa).

4Fe-4S ferredoxin-type domains are found at residues 302 to 332 and 351 to 380; these read GSEF…GHSY and YDDY…LHDL. [4Fe-4S] cluster contacts are provided by Cys-311, Cys-314, Cys-317, Cys-321, Cys-364, Cys-367, and Cys-371.

The protein belongs to the LutB/YkgF family.

Is involved in L-lactate degradation and allows cells to grow with lactate as the sole carbon source. Has probably a role as an electron transporter during oxidation of L-lactate. In Bacillus mycoides (strain KBAB4) (Bacillus weihenstephanensis), this protein is Lactate utilization protein B 2.